The primary structure comprises 1196 residues: DNA-directed RNA polymerase I subunit RPA2 (1196 aa).

The C4-type zinc-finger motif lies at 1097-1124; it reads CRECGSILTTQSSVPKIGSMVTIRCRRC.

The protein belongs to the RNA polymerase beta chain family. In terms of assembly, component of the RNA polymerase I (Pol I) complex consisting of 14 subunits.

The protein resides in the nucleus. The protein localises to the nucleolus. The enzyme catalyses RNA(n) + a ribonucleoside 5'-triphosphate = RNA(n+1) + diphosphate. Functionally, DNA-dependent RNA polymerase catalyzes the transcription of DNA into RNA using the four ribonucleoside triphosphates as substrates. Second largest core component of RNA polymerase I which synthesizes ribosomal RNA precursors. Proposed to contribute to the polymerase catalytic activity and forms the polymerase active center together with the largest subunit. Pol I is composed of mobile elements and RPA2 is part of the core element with the central large cleft and probably a clamp element that moves to open and close the cleft. This Eremothecium gossypii (strain ATCC 10895 / CBS 109.51 / FGSC 9923 / NRRL Y-1056) (Yeast) protein is DNA-directed RNA polymerase I subunit RPA2 (RPA2).